The following is a 534-amino-acid chain: Cytochrome P450 monooxygenase CYP4 (534 aa).

A helical membrane pass occupies residues 46–66; that stretch reads TIIFCVLMSLVGYIVSRIIWG. Asn-220 is a glycosylation site (N-linked (GlcNAc...) asparagine). Cys-477 provides a ligand contact to heme. Asn-515 carries an N-linked (GlcNAc...) asparagine glycan.

Belongs to the cytochrome P450 family. Heme serves as cofactor.

The protein localises to the membrane. Its pathway is secondary metabolite biosynthesis. Its function is as follows. Cytochrome P450 monooxygenase; part of the gene cluster that mediates the biosynthesis of a tyrosine-derived cytochalasan acting as a fungal signal recognized by resistant rice plants and leads to avirulence in Pi33 resistant rice cultivars. The first step in the pathway is catalyzed by the hybrid PKS-NRPS ACE1, assisted by the enoyl reductase RAP1, that are responsible for fusion of the tyrosine precursor and the polyketide backbone. The polyketide synthase module (PKS) of ACE1 is responsible for the synthesis of the polyketide backbone and the downstream nonribosomal peptide synthetase (NRPS) amidates the carboxyl end of the polyketide with the tyrosine precursor. Because ACE1 lacks a designated enoylreductase (ER) domain, the required activity is provided the enoyl reductase RAP1. Reduction by the hydrolyase ORFZ, followed by dehydration and intra-molecular Diels-Alder cyclization by the Diels-Alderase ORF3 then yield the required isoindolone-fused macrocycle. A number of oxidative steps catalyzed by the tailoring enzymes identified within the cluster, including cytochrome P450 monooxygenases CYP1 to CYP4, the FAD-linked oxidoreductase OXR2 and the short-chain dehydrogenase/reductase OXR1, are further required to afford the final cytochalasans that confer avirulence and which have still to be identified. The monooxygenase CYP1 has been shown to be a site-selective C-18 hydroxylase whereas the function of CYP3 is the site-selective epoxidation of the C-6/C-7 olefin that is present in some intermediate compounds. Finally, SYN2 and RAP2 are not required for avirulence in Pi33 resistant rice cultivars. The sequence is that of Cytochrome P450 monooxygenase CYP4 from Pyricularia oryzae (strain 70-15 / ATCC MYA-4617 / FGSC 8958) (Rice blast fungus).